Consider the following 134-residue polypeptide: Homeobox protein ceh-5 (134 aa).

The segment at residues 35–94 (PKRPRTVFTDEQLEKLEESFNTSGYLSGSTRAKLAESLGLSDNQVKVWFQNRRTKQKKID) is a DNA-binding region (homeobox).

It is found in the nucleus. This chain is Homeobox protein ceh-5 (ceh-5), found in Caenorhabditis elegans.